A 240-amino-acid polypeptide reads, in one-letter code: Small ribosomal subunit protein uS2 (240 aa).

This sequence belongs to the universal ribosomal protein uS2 family.

In Pasteurella multocida (strain Pm70), this protein is Small ribosomal subunit protein uS2 (rpsB).